Reading from the N-terminus, the 231-residue chain is Chlorophyll a-b binding protein 1B-20, chloroplastic (231 aa).

Residues 1 to 25 (RIQAYRFRTRVPPSPAASGSPRSTR) are disordered. The N-terminal 31 residues, 1–31 (RIQAYRFRTRVPPSPAASGSPRSTRRDVAVQ), are a transit peptide targeting the chloroplast. Tryptophan 36 is a binding site for chlorophyll b. Phenylalanine 56 contacts chlorophyll a. The chlorophyll b site is built by arginine 80, serine 118, glutamate 133, and arginine 136. Lysine 182, glutamate 183, asparagine 186, arginine 188, glutamine 200, and histidine 215 together coordinate chlorophyll a. Residues 183–199 (ELANGRLAMLAFLGFLV) form a helical membrane-spanning segment.

This sequence belongs to the light-harvesting chlorophyll a/b-binding (LHC) protein family. In terms of assembly, the LHC complex consists of chlorophyll a-b binding proteins. The cofactor is Binds at least 14 chlorophylls (8 Chl-a and 6 Chl-b) and carotenoids such as lutein and neoxanthin.. Photoregulated by reversible phosphorylation of its threonine residues.

It localises to the plastid. The protein resides in the chloroplast thylakoid membrane. Functionally, the light-harvesting complex (LHC) functions as a light receptor, it captures and delivers excitation energy to photosystems with which it is closely associated. This chain is Chlorophyll a-b binding protein 1B-20, chloroplastic (LHC Ib-20), found in Hordeum vulgare (Barley).